The following is a 491-amino-acid chain: Chromosomal replication initiator protein DnaA (491 aa).

Residues 1–69 (MTTWDKCLKK…TIQECHGNDL (69 aa)) are domain I, interacts with DnaA modulators. A domain II region spans residues 69 to 154 (LIIEYSNKKF…KEDEEYSFGL (86 aa)). The domain III, AAA+ region stretch occupies residues 155-371 (PLKEKYVFDS…GALNRVLTTS (217 aa)). 4 residues coordinate ATP: Gly199, Gly201, Lys202, and Thr203. The domain IV, binds dsDNA stretch occupies residues 372 to 491 (KFNHKDPTIE…YELLLNKISR (120 aa)).

The protein belongs to the DnaA family. In terms of assembly, oligomerizes as a right-handed, spiral filament on DNA at oriC.

It localises to the cytoplasm. In terms of biological role, plays an essential role in the initiation and regulation of chromosomal replication. ATP-DnaA binds to the origin of replication (oriC) to initiate formation of the DNA replication initiation complex once per cell cycle. Binds the DnaA box (a 9 base pair repeat at the origin) and separates the double-stranded (ds)DNA. Forms a right-handed helical filament on oriC DNA; dsDNA binds to the exterior of the filament while single-stranded (ss)DNA is stabiized in the filament's interior. The ATP-DnaA-oriC complex binds and stabilizes one strand of the AT-rich DNA unwinding element (DUE), permitting loading of DNA polymerase. After initiation quickly degrades to an ADP-DnaA complex that is not apt for DNA replication. Binds acidic phospholipids. The sequence is that of Chromosomal replication initiator protein DnaA from Francisella tularensis subsp. tularensis (strain WY96-3418).